The sequence spans 489 residues: Putative ABC transporter ATP-binding protein TDE_0282 (489 aa).

2 ABC transporter domains span residues 2-241 (ITLR…SMKL) and 269-487 (FAVK…MQLE). ATP is bound by residues 36 to 43 (GASGCGKT) and 301 to 308 (GENGAGKT).

This sequence belongs to the ABC transporter superfamily.

The protein localises to the cell inner membrane. Its function is as follows. Probably part of an ABC transporter complex. Responsible for energy coupling to the transport system. The polypeptide is Putative ABC transporter ATP-binding protein TDE_0282 (Treponema denticola (strain ATCC 35405 / DSM 14222 / CIP 103919 / JCM 8153 / KCTC 15104)).